The primary structure comprises 235 residues: Sugar fermentation stimulation protein homolog (235 aa).

It belongs to the SfsA family.

This Pseudomonas paraeruginosa (strain DSM 24068 / PA7) (Pseudomonas aeruginosa (strain PA7)) protein is Sugar fermentation stimulation protein homolog.